Reading from the N-terminus, the 332-residue chain is L-lactate dehydrogenase C chain (332 aa).

NAD(+) contacts are provided by residues 29 to 57 and R99; that span reads GAVGMACAICILLKDLADELALVDVAVDK. Substrate contacts are provided by R106, N138, and R169. NAD(+) is bound at residue N138. Catalysis depends on H193, which acts as the Proton acceptor. Residue T248 coordinates substrate. S301 carries the phosphoserine modification.

This sequence belongs to the LDH/MDH superfamily. LDH family. Homotetramer. Interacts with RABL2/RABL2A; binds preferentially to GTP-bound RABL2.

It is found in the cytoplasm. The catalysed reaction is (S)-lactate + NAD(+) = pyruvate + NADH + H(+). It participates in fermentation; pyruvate fermentation to lactate; (S)-lactate from pyruvate: step 1/1. Possible role in sperm motility. The protein is L-lactate dehydrogenase C chain (LDHC) of Sus scrofa (Pig).